The chain runs to 147 residues: Lysozyme C (147 aa).

An N-terminal signal peptide occupies residues 1–17 (MRSLLILVLCFLPLAAP). One can recognise a C-type lysozyme domain in the interval 19-147 (KVYGRCELAA…VNVWIRGCRL (129 aa)). Disulfide bonds link Cys-24-Cys-145, Cys-48-Cys-133, Cys-82-Cys-98, and Cys-94-Cys-112. Residues Glu-53 and Asp-70 contribute to the active site.

It belongs to the glycosyl hydrolase 22 family. Monomer. By an evolutionary shift in the site of proteolytic cleavage of prelysozyme, Gly-18 became the N-terminal residue of the mature protein instead of being the C-terminal residue of the signal sequence as in other birds.

It localises to the secreted. It carries out the reaction Hydrolysis of (1-&gt;4)-beta-linkages between N-acetylmuramic acid and N-acetyl-D-glucosamine residues in a peptidoglycan and between N-acetyl-D-glucosamine residues in chitodextrins.. Its function is as follows. Lysozymes have primarily a bacteriolytic function; those in tissues and body fluids are associated with the monocyte-macrophage system and enhance the activity of immunoagents. In Phasianus colchicus colchicus (Black-necked pheasant), this protein is Lysozyme C (LYZ).